A 172-amino-acid chain; its full sequence is Xanthine-guanine phosphoribosyltransferase (172 aa).

Residues 47–48 (RG) and 106–114 (DDLVDTGKT) each bind 5-phospho-alpha-D-ribose 1-diphosphate. Position 107 (aspartate 107) interacts with Mg(2+). Aspartate 110 and isoleucine 153 together coordinate guanine. Xanthine is bound by residues aspartate 110 and isoleucine 153. Residues 110–114 (DTGKT) and 152–153 (WI) each bind GMP.

It belongs to the purine/pyrimidine phosphoribosyltransferase family. XGPT subfamily. In terms of assembly, homotetramer. Mg(2+) serves as cofactor.

It localises to the cell inner membrane. It catalyses the reaction GMP + diphosphate = guanine + 5-phospho-alpha-D-ribose 1-diphosphate. The enzyme catalyses XMP + diphosphate = xanthine + 5-phospho-alpha-D-ribose 1-diphosphate. The catalysed reaction is IMP + diphosphate = hypoxanthine + 5-phospho-alpha-D-ribose 1-diphosphate. It functions in the pathway purine metabolism; GMP biosynthesis via salvage pathway; GMP from guanine: step 1/1. The protein operates within purine metabolism; XMP biosynthesis via salvage pathway; XMP from xanthine: step 1/1. Its function is as follows. Purine salvage pathway enzyme that catalyzes the transfer of the ribosyl-5-phosphate group from 5-phospho-alpha-D-ribose 1-diphosphate (PRPP) to the N9 position of the 6-oxopurines guanine and xanthine to form the corresponding ribonucleotides GMP (guanosine 5'-monophosphate) and XMP (xanthosine 5'-monophosphate), with the release of PPi. To a lesser extent, also acts on hypoxanthine. This chain is Xanthine-guanine phosphoribosyltransferase, found in Rhodopseudomonas palustris (strain HaA2).